Reading from the N-terminus, the 513-residue chain is ATP synthase subunit alpha 1 (513 aa).

169–176 (GDRQTGKT) contacts ATP.

It belongs to the ATPase alpha/beta chains family. F-type ATPases have 2 components, CF(1) - the catalytic core - and CF(0) - the membrane proton channel. CF(1) has five subunits: alpha(3), beta(3), gamma(1), delta(1), epsilon(1). CF(0) has three main subunits: a(1), b(2) and c(9-12). The alpha and beta chains form an alternating ring which encloses part of the gamma chain. CF(1) is attached to CF(0) by a central stalk formed by the gamma and epsilon chains, while a peripheral stalk is formed by the delta and b chains.

The protein localises to the cell inner membrane. It carries out the reaction ATP + H2O + 4 H(+)(in) = ADP + phosphate + 5 H(+)(out). Its function is as follows. Produces ATP from ADP in the presence of a proton gradient across the membrane. The alpha chain is a regulatory subunit. In Photobacterium profundum (strain SS9), this protein is ATP synthase subunit alpha 1.